The sequence spans 289 residues: Acetyl-coenzyme A carboxylase carboxyl transferase subunit beta (289 aa).

In terms of domain architecture, CoA carboxyltransferase N-terminal spans 28-289 (VMTKCPKCKK…QGGEMAVWQS (262 aa)). Residues cysteine 32, cysteine 35, cysteine 51, and cysteine 54 each coordinate Zn(2+). The segment at 32 to 54 (CPKCKKIMYTKEVLKNLKVCVNC) adopts a C4-type zinc-finger fold.

This sequence belongs to the AccD/PCCB family. Acetyl-CoA carboxylase is a heterohexamer composed of biotin carboxyl carrier protein (AccB), biotin carboxylase (AccC) and two subunits each of ACCase subunit alpha (AccA) and ACCase subunit beta (AccD). Zn(2+) is required as a cofactor.

It is found in the cytoplasm. It catalyses the reaction N(6)-carboxybiotinyl-L-lysyl-[protein] + acetyl-CoA = N(6)-biotinyl-L-lysyl-[protein] + malonyl-CoA. It functions in the pathway lipid metabolism; malonyl-CoA biosynthesis; malonyl-CoA from acetyl-CoA: step 1/1. Its function is as follows. Component of the acetyl coenzyme A carboxylase (ACC) complex. Biotin carboxylase (BC) catalyzes the carboxylation of biotin on its carrier protein (BCCP) and then the CO(2) group is transferred by the transcarboxylase to acetyl-CoA to form malonyl-CoA. In Bacillus cereus (strain ZK / E33L), this protein is Acetyl-coenzyme A carboxylase carboxyl transferase subunit beta.